The following is a 175-amino-acid chain: NAD(P)H-quinone oxidoreductase subunit J (175 aa).

The protein belongs to the complex I 30 kDa subunit family. As to quaternary structure, NDH-1 can be composed of about 15 different subunits; different subcomplexes with different compositions have been identified which probably have different functions.

It is found in the cellular thylakoid membrane. It catalyses the reaction a plastoquinone + NADH + (n+1) H(+)(in) = a plastoquinol + NAD(+) + n H(+)(out). The enzyme catalyses a plastoquinone + NADPH + (n+1) H(+)(in) = a plastoquinol + NADP(+) + n H(+)(out). NDH-1 shuttles electrons from an unknown electron donor, via FMN and iron-sulfur (Fe-S) centers, to quinones in the respiratory and/or the photosynthetic chain. The immediate electron acceptor for the enzyme in this species is believed to be plastoquinone. Couples the redox reaction to proton translocation, and thus conserves the redox energy in a proton gradient. Cyanobacterial NDH-1 also plays a role in inorganic carbon-concentration. The chain is NAD(P)H-quinone oxidoreductase subunit J from Nostoc sp. (strain PCC 7120 / SAG 25.82 / UTEX 2576).